The sequence spans 551 residues: Cytochrome c oxidase subunit 1 (551 aa).

A helical transmembrane segment spans residues 34-54 (TLYLYSGVWGGLFGASLSLMI). Gly-62 serves as a coordination point for Ca(2+). Residue His-79 coordinates Fe(II)-heme a. A run of 6 helical transmembrane segments spans residues 81-101 (LMMIFFAVMPILIEAFGNWLI), 126-146 (ALYLLMLSFSTDKGVGAGWTI), 163-183 (VLIVSLHLAGLSSLVGAINFA), 209-229 (TAVLLIISIPVLGGGITMILF), 252-272 (LFWFFGHPEVYILILPAFGVM), and 285-305 (VFGLIGMVYAMIGIGGLGCMV). Residue His-258 coordinates Cu cation. Residues 258-262 (HPEVY) constitute a cross-link (1'-histidyl-3'-tyrosine (His-Tyr)). O2 is bound at residue Tyr-262. The Cu cation site is built by His-308 and His-309. The next 2 membrane-spanning stretches (helical) occupy residues 326 to 346 (ATMVIAVPTGVKVFSWLATMA) and 356 to 376 (AYWSTGFLFLFTVGGLTGVLL). Residues His-386 and Asp-387 each coordinate Mg(2+). 3 helical membrane-spanning segments follow: residues 391-411 (VVAHFHYVLSMGAVFGVFCGL), 432-452 (FMAMFFGVNTTFFPQHFLGLS), and 475-495 (GSAVSFGSLMYFKFLLWEALV). His-394 provides a ligand contact to heme a3. Fe(II)-heme a is bound at residue His-396.

This sequence belongs to the heme-copper respiratory oxidase family. As to quaternary structure, component of the cytochrome c oxidase (complex IV, CIV), a multisubunit enzyme composed of a catalytic core of 3 subunits and several supernumerary subunits. The complex exists as a monomer or a dimer and forms supercomplexes (SCs) in the inner mitochondrial membrane with ubiquinol-cytochrome c oxidoreductase (cytochrome b-c1 complex, complex III, CIII). Heme serves as cofactor. It depends on Cu cation as a cofactor.

It is found in the mitochondrion inner membrane. It carries out the reaction 4 Fe(II)-[cytochrome c] + O2 + 8 H(+)(in) = 4 Fe(III)-[cytochrome c] + 2 H2O + 4 H(+)(out). The protein operates within energy metabolism; oxidative phosphorylation. Component of the cytochrome c oxidase, the last enzyme in the mitochondrial electron transport chain which drives oxidative phosphorylation. The respiratory chain contains 3 multisubunit complexes succinate dehydrogenase (complex II, CII), ubiquinol-cytochrome c oxidoreductase (cytochrome b-c1 complex, complex III, CIII) and cytochrome c oxidase (complex IV, CIV), that cooperate to transfer electrons derived from NADH and succinate to molecular oxygen, creating an electrochemical gradient over the inner membrane that drives transmembrane transport and the ATP synthase. Cytochrome c oxidase is the component of the respiratory chain that catalyzes the reduction of oxygen to water. Electrons originating from reduced cytochrome c in the intermembrane space (IMS) are transferred via the dinuclear copper A center (CU(A)) of subunit 2 and heme A of subunit 1 to the active site in subunit 1, a binuclear center (BNC) formed by heme A3 and copper B (CU(B)). The BNC reduces molecular oxygen to 2 water molecules using 4 electrons from cytochrome c in the IMS and 4 protons from the mitochondrial matrix. This is Cytochrome c oxidase subunit 1 (COI) from Mytilus edulis (Blue mussel).